We begin with the raw amino-acid sequence, 167 residues long: Crossover junction endodeoxyribonuclease RuvC (167 aa).

Active-site residues include D7, E67, and D139. Residues D7, E67, and D139 each contribute to the Mg(2+) site.

The protein belongs to the RuvC family. In terms of assembly, homodimer which binds Holliday junction (HJ) DNA. The HJ becomes 2-fold symmetrical on binding to RuvC with unstacked arms; it has a different conformation from HJ DNA in complex with RuvA. In the full resolvosome a probable DNA-RuvA(4)-RuvB(12)-RuvC(2) complex forms which resolves the HJ. Mg(2+) serves as cofactor.

The protein resides in the cytoplasm. The catalysed reaction is Endonucleolytic cleavage at a junction such as a reciprocal single-stranded crossover between two homologous DNA duplexes (Holliday junction).. The RuvA-RuvB-RuvC complex processes Holliday junction (HJ) DNA during genetic recombination and DNA repair. Endonuclease that resolves HJ intermediates. Cleaves cruciform DNA by making single-stranded nicks across the HJ at symmetrical positions within the homologous arms, yielding a 5'-phosphate and a 3'-hydroxyl group; requires a central core of homology in the junction. The consensus cleavage sequence is 5'-(A/T)TT(C/G)-3'. Cleavage occurs on the 3'-side of the TT dinucleotide at the point of strand exchange. HJ branch migration catalyzed by RuvA-RuvB allows RuvC to scan DNA until it finds its consensus sequence, where it cleaves and resolves the cruciform DNA. This is Crossover junction endodeoxyribonuclease RuvC from Akkermansia muciniphila (strain ATCC BAA-835 / DSM 22959 / JCM 33894 / BCRC 81048 / CCUG 64013 / CIP 107961 / Muc).